The chain runs to 484 residues: Cysteine--tRNA ligase (484 aa).

Position 29 (cysteine 29) interacts with Zn(2+). The 'HIGH' region signature appears at 31 to 41 (ITVYDYCHLGH). Residues cysteine 215, histidine 240, and glutamate 244 each coordinate Zn(2+). The short motif at 272-276 (KMSKS) is the 'KMSKS' region element. Lysine 275 lines the ATP pocket.

The protein belongs to the class-I aminoacyl-tRNA synthetase family. Monomer. The cofactor is Zn(2+).

It is found in the cytoplasm. The enzyme catalyses tRNA(Cys) + L-cysteine + ATP = L-cysteinyl-tRNA(Cys) + AMP + diphosphate. The chain is Cysteine--tRNA ligase from Rippkaea orientalis (strain PCC 8801 / RF-1) (Cyanothece sp. (strain PCC 8801)).